The chain runs to 451 residues: Glycine--tRNA ligase (451 aa).

Positions 101 and 151 each coordinate substrate. Residues 183 to 185 (RNE), 193 to 198 (FRTCEF), 267 to 268 (EL), and 312 to 315 (GLTR) contribute to the ATP site. 198–202 (FEQME) provides a ligand contact to substrate. Residue 308–312 (ETSAG) coordinates substrate.

The protein belongs to the class-II aminoacyl-tRNA synthetase family. In terms of assembly, homodimer.

The protein resides in the cytoplasm. The enzyme catalyses tRNA(Gly) + glycine + ATP = glycyl-tRNA(Gly) + AMP + diphosphate. Functionally, catalyzes the attachment of glycine to tRNA(Gly). This is Glycine--tRNA ligase from Treponema denticola (strain ATCC 35405 / DSM 14222 / CIP 103919 / JCM 8153 / KCTC 15104).